We begin with the raw amino-acid sequence, 1035 residues long: Eukaryotic translation initiation factor 3 subunit A (1035 aa).

A coiled-coil region spans residues 92–121 (LKKFIELAEKKVTEAQAKADEIQSSLESAA). Residues 339–523 (MTKAASFVLL…GVLTFDTDVF (185 aa)) form the PCI domain. Positions 606-910 (ERRVIIEKKK…LRAKRAGLSE (305 aa)) form a coiled coil. Basic and acidic residues-rich tracts occupy residues 619 to 632 (TDAL…EETR) and 809 to 901 (KAAE…EARL). Disordered stretches follow at residues 619-649 (TDAL…QRLA) and 809-1035 (KAAE…QQNQ). Composition is skewed to low complexity over residues 943-953 (KEAAGGAAPEA) and 988-1004 (PPSQ…QTPP).

This sequence belongs to the eIF-3 subunit A family. Component of the eukaryotic translation initiation factor 3 (eIF-3) complex.

It localises to the cytoplasm. In terms of biological role, RNA-binding component of the eukaryotic translation initiation factor 3 (eIF-3) complex, which is involved in protein synthesis of a specialized repertoire of mRNAs and, together with other initiation factors, stimulates binding of mRNA and methionyl-tRNAi to the 40S ribosome. The eIF-3 complex specifically targets and initiates translation of a subset of mRNAs involved in cell proliferation. The sequence is that of Eukaryotic translation initiation factor 3 subunit A (tif32) from Emericella nidulans (strain FGSC A4 / ATCC 38163 / CBS 112.46 / NRRL 194 / M139) (Aspergillus nidulans).